Reading from the N-terminus, the 447-residue chain is Omega-3 fatty acid desaturase, chloroplastic (447 aa).

The Histidine box-1 signature appears at 167–171 (HDCGH). The short motif at 203-207 (HRTHH) is the Histidine box-2 element. Residues 370-374 (HVIHH) carry the Histidine box-3 motif.

It belongs to the fatty acid desaturase type 1 family.

The protein localises to the plastid. It is found in the chloroplast membrane. It functions in the pathway lipid metabolism; polyunsaturated fatty acid biosynthesis. Chloroplast omega-3 fatty acid desaturase introduces the third double bond in the biosynthesis of 16:3 and 18:3 fatty acids, important constituents of plant membranes. It is thought to use ferredoxin as an electron donor and to act on fatty acids esterified to galactolipids, sulfolipids and phosphatidylglycerol. In Sesamum indicum (Oriental sesame), this protein is Omega-3 fatty acid desaturase, chloroplastic (FAD7).